The chain runs to 284 residues: Trimeric intracellular cation channel type B-B (284 aa).

Over 1–15 (MESLSEVSVQFSQLS) the chain is Lumenal. Residues 16-32 (MFPFFDMAHYLASVMSA) traverse the membrane as a helical segment. Residues 33-44 (REQAGALDIASH) are Cytoplasmic-facing. The chain crosses the membrane as a helical span at residues 45 to 68 (SPMASWFSAMLHCFGGGILSSILL). Topologically, residues 69 to 79 (AEPPVGILANT) are lumenal. Residues 80–99 (TNIMLASAIWYMVYYFPYDL) form a helical membrane-spanning segment. The Cytoplasmic portion of the chain corresponds to 100–102 (FYN). Residues 103-121 (CFFFLPIRLIAAGMKEVTR) traverse the membrane as a helical segment. Residues Lys-117 and Arg-121 each contribute to the a 1,2-diacyl-sn-glycero-3-phospho-(1D-myo-inositol-4,5-bisphosphate) site. Topologically, residues 122-139 (TWKILSGITHAHSHYKDA) are lumenal. The helical transmembrane segment at 140-157 (WLVMITIGWARGAGGGLI) threads the bilayer. Residues 158 to 178 (SNFEQLVRGVWKPESNEFLKM) are Cytoplasmic-facing. Residues 179–196 (SYPVKVTLIGAVLFTLQH) form a helical membrane-spanning segment. Residues 197–204 (GHYLPISR) lie on the Lumenal side of the membrane. The chain crosses the membrane as a helical span at residues 205–225 (HNLMFIYTMFLVSIKVTMMLT). At 226–284 (HSAGSPFLPLETPLHRILFGLRQNQAEVRESPSSSGAKGKPSKKTLDKDSGEQSNKKDK) the chain is on the cytoplasmic side. A disordered region spans residues 250-284 (QAEVRESPSSSGAKGKPSKKTLDKDSGEQSNKKDK). Residues 269 to 284 (KTLDKDSGEQSNKKDK) are compositionally biased toward basic and acidic residues.

It belongs to the TMEM38 family. As to quaternary structure, homotrimer; conformation seems to be controled by binding to diacylglycerol (DAG).

It localises to the endoplasmic reticulum membrane. It catalyses the reaction K(+)(in) = K(+)(out). With respect to regulation, channel activity is activated by increased cytosolic Ca(2+) levels and blocked by luminal high Ca(2+) levels. Functionally, intracellular monovalent cation channel required for maintenance of rapid intracellular calcium release. Acts as a potassium counter-ion channel that functions in synchronization with calcium release from intracellular stores. Activated by increased cytosolic Ca(2+) levels. The chain is Trimeric intracellular cation channel type B-B (tmem38b-b) from Xenopus laevis (African clawed frog).